Reading from the N-terminus, the 340-residue chain is Predicted GPI-anchored protein 46 (340 aa).

The first 29 residues, Met1–Thr29, serve as a signal peptide directing secretion. The span at Ser99 to Thr115 shows a compositional bias: low complexity. Disordered regions lie at residues Ser99 to Ser154 and Met181 to Tyr212. The N-linked (GlcNAc...) asparagine glycan is linked to Asn127. Positions Ser182–Ser191 are enriched in low complexity. The span at Leu192 to Asn202 shows a compositional bias: basic and acidic residues. Residue Asn270 is glycosylated (N-linked (GlcNAc...) asparagine). A lipid anchor (GPI-anchor amidated asparagine) is attached at Asn314. The propeptide at Ser315–Gly340 is removed in mature form.

The protein resides in the cell membrane. It localises to the secreted. The protein is Predicted GPI-anchored protein 46 (PGA46) of Candida albicans (strain SC5314 / ATCC MYA-2876) (Yeast).